Consider the following 98-residue polypeptide: Large ribosomal subunit protein uL23 (98 aa).

Belongs to the universal ribosomal protein uL23 family. Part of the 50S ribosomal subunit. Contacts protein L29, and trigger factor when it is bound to the ribosome.

One of the early assembly proteins it binds 23S rRNA. One of the proteins that surrounds the polypeptide exit tunnel on the outside of the ribosome. Forms the main docking site for trigger factor binding to the ribosome. The protein is Large ribosomal subunit protein uL23 of Marinomonas sp. (strain MWYL1).